The primary structure comprises 349 residues: D-alanine--D-alanine ligase (349 aa).

In terms of domain architecture, ATP-grasp spans 133–335 (QVLESATTIP…YSVLIEELVS (203 aa)). 163 to 218 (EEKLIYPVFVKPANMGSSVGISKAENRTDLKQAIALALKYDSRVLIEQGVDAREIE) contributes to the ATP binding site. Mg(2+)-binding residues include Asp289, Glu302, and Asn304.

This sequence belongs to the D-alanine--D-alanine ligase family. It depends on Mg(2+) as a cofactor. Mn(2+) serves as cofactor.

It localises to the cytoplasm. It carries out the reaction 2 D-alanine + ATP = D-alanyl-D-alanine + ADP + phosphate + H(+). The protein operates within cell wall biogenesis; peptidoglycan biosynthesis. Cell wall formation. This chain is D-alanine--D-alanine ligase, found in Streptococcus mutans serotype c (strain ATCC 700610 / UA159).